A 339-amino-acid chain; its full sequence is 2,3,4,5-tetrahydropyridine-2,6-dicarboxylate N-succinyltransferase (339 aa).

Aspartate 180 contributes to the Mg(2+) binding site. Glutamate 213 (acyl-anhydride intermediate) is an active-site residue. Residues arginine 215, glycine 230, serine 233, alanine 256, glutamate 271–alanine 272, glycine 279, and lysine 300 contribute to the succinyl-CoA site.

Belongs to the type 2 tetrahydrodipicolinate N-succinyltransferase family. In terms of assembly, homotrimer.

It localises to the cytoplasm. It catalyses the reaction (S)-2,3,4,5-tetrahydrodipicolinate + succinyl-CoA + H2O = (S)-2-succinylamino-6-oxoheptanedioate + CoA. The protein operates within amino-acid biosynthesis; L-lysine biosynthesis via DAP pathway; LL-2,6-diaminopimelate from (S)-tetrahydrodipicolinate (succinylase route): step 1/3. Catalyzes the conversion of the cyclic tetrahydrodipicolinate (THDP) into the acyclic N-succinyl-L-2-amino-6-oxopimelate using succinyl-CoA. The polypeptide is 2,3,4,5-tetrahydropyridine-2,6-dicarboxylate N-succinyltransferase (Bifidobacterium longum (strain NCC 2705)).